The chain runs to 160 residues: Major pollen allergen Bet v 1-B (160 aa).

Residues lysine 55, tyrosine 82, tyrosine 84, and asparagine 101 each contribute to the brassinolide site.

Belongs to the BetVI family.

It is found in the cytoplasm. Its function is as follows. May be a general steroid carrier protein. The sequence is that of Major pollen allergen Bet v 1-B (BETV1B) from Betula pendula (European white birch).